The primary structure comprises 1295 residues: Phosphoribosylformylglycinamidine synthase (1295 aa).

Residues Trp-304–Lys-326 form a disordered region. Residues Gly-306–Asp-317, Thr-385–Tyr-387, and Ala-677 contribute to the ATP site. The Mg(2+) site is built by Asp-678, Glu-717, Asn-721, and Asp-884. Residues Leu-995–Asp-1012 show a composition bias toward basic and acidic residues. The tract at residues Leu-995–Leu-1017 is disordered. The Glutamine amidotransferase type-1 domain occupies Val-1042–Gly-1295. The Nucleophile role is filled by Cys-1135. Residues His-1260 and Glu-1262 contribute to the active site.

This sequence in the N-terminal section; belongs to the FGAMS family. As to quaternary structure, monomer.

The protein localises to the cytoplasm. It catalyses the reaction N(2)-formyl-N(1)-(5-phospho-beta-D-ribosyl)glycinamide + L-glutamine + ATP + H2O = 2-formamido-N(1)-(5-O-phospho-beta-D-ribosyl)acetamidine + L-glutamate + ADP + phosphate + H(+). The protein operates within purine metabolism; IMP biosynthesis via de novo pathway; 5-amino-1-(5-phospho-D-ribosyl)imidazole from N(2)-formyl-N(1)-(5-phospho-D-ribosyl)glycinamide: step 1/2. Phosphoribosylformylglycinamidine synthase involved in the purines biosynthetic pathway. Catalyzes the ATP-dependent conversion of formylglycinamide ribonucleotide (FGAR) and glutamine to yield formylglycinamidine ribonucleotide (FGAM) and glutamate. In Sodalis glossinidius (strain morsitans), this protein is Phosphoribosylformylglycinamidine synthase.